A 580-amino-acid chain; its full sequence is N(6)-adenosine-methyltransferase catalytic subunit METTL3 (580 aa).

Residues 1 to 70 (MSDTWSSIQA…PKPSTTSVAP (70 aa)) form a disordered region. Ser2 bears the N-acetylserine; alternate mark. Ser2 carries the post-translational modification Phosphoserine; alternate. A compositionally biased stretch (basic and acidic residues) spans 28–37 (QDSGHLDLRN). Phosphoserine is present on residues Ser43, Ser48, and Ser50. The span at 55–67 (APTSSGPKPSTTS) shows a compositional bias: low complexity. Residues Lys177, Lys211, Lys212, and Lys215 each participate in a glycyl lysine isopeptide (Lys-Gly) (interchain with G-Cter in SUMO1) cross-link. The interval 198–217 (LASSASEPAKEPAKKSRKHA) is disordered. The short motif at 210 to 215 (AKKSRK) is the Nuclear localization signal element. Phosphoserine is present on residues Ser219, Ser243, and Ser350. S-adenosyl-L-methionine is bound by residues 377–378 (DI) and Asp395. A gate loop 1 region spans residues 396 to 410 (PPWDIHMELPYGTLT). 2 interaction with METTL14 regions span residues 450–454 (ERVDE) and 464–480 (QRIIRTGRTGHWLNHGK). The interphase loop stretch occupies residues 462–479 (QLQRIIRTGRTGHWLNHG). The interval 465–478 (RIIRTGRTGHWLNH) is positively charged region required for RNA-binding. The gate loop 2 stretch occupies residues 507 to 515 (VRSTSHKPD). S-adenosyl-L-methionine is bound by residues Lys513, 536-539 (RPHN), and 549-550 (NQ).

This sequence belongs to the MT-A70-like family. Heterodimer; heterodimerizes with METTL14 to form an antiparallel heterodimer that constitutes an active methyltransferase. Component of the WMM complex, a N6-methyltransferase complex composed of a catalytic subcomplex, named MAC, and of an associated subcomplex, named MACOM. The MAC subcomplex is composed of METTL3 and METTL14. The MACOM subcomplex is composed of WTAP, ZC3H13, CBLL1/HAKAI, VIRMA, and, in some cases of RBM15 (RBM15 or RBM15B). Interacts with NCBP1/CBP80. Interacts with EIF4E. Interacts with EIF3B. Post-translationally, sumoylation inhibits the N6-adenosine-methyltransferase activity. Sumoylation does not affect subcellular location or interaction with METTL14. Desumoylated by SENP1. Present in both germ cells and somatic cells during testis development (at protein level).

The protein localises to the nucleus. It localises to the nucleus speckle. It is found in the cytoplasm. The enzyme catalyses an adenosine in mRNA + S-adenosyl-L-methionine = an N(6)-methyladenosine in mRNA + S-adenosyl-L-homocysteine + H(+). With respect to regulation, methyltransferase activity is regulated by miRNAs via a sequence pairing mechanism. Methyltransferase activity is inhibited by sumoylation. In terms of biological role, the METTL3-METTL14 heterodimer forms a N6-methyltransferase complex that methylates adenosine residues at the N(6) position of some RNAs and regulates various processes such as the circadian clock, differentiation of embryonic and hematopoietic stem cells, cortical neurogenesis, response to DNA damage, differentiation of T-cells and primary miRNA processing. In the heterodimer formed with METTL14, METTL3 constitutes the catalytic core. N6-methyladenosine (m6A), which takes place at the 5'-[AG]GAC-3' consensus sites of some mRNAs, plays a role in mRNA stability, processing, translation efficiency and editing. M6A acts as a key regulator of mRNA stability: methylation is completed upon the release of mRNA into the nucleoplasm and promotes mRNA destabilization and degradation. In embryonic stem cells (ESCs), m6A methylation of mRNAs encoding key naive pluripotency-promoting transcripts results in transcript destabilization, promoting differentiation of ESCs. M6A regulates the length of the circadian clock: acts as an early pace-setter in the circadian loop by putting mRNA production on a fast-track for facilitating nuclear processing, thereby providing an early point of control in setting the dynamics of the feedback loop. M6A also regulates circadian regulation of hepatic lipid metabolism. M6A regulates spermatogonial differentiation and meiosis and is essential for male fertility and spermatogenesis. Also required for oogenesis. Involved in the response to DNA damage: in response to ultraviolet irradiation, METTL3 rapidly catalyzes the formation of m6A on poly(A) transcripts at DNA damage sites, leading to the recruitment of POLK to DNA damage sites. M6A is also required for T-cell homeostasis and differentiation: m6A methylation of transcripts of SOCS family members (SOCS1, SOCS3 and CISH) in naive T-cells promotes mRNA destabilization and degradation, promoting T-cell differentiation. Inhibits the type I interferon response by mediating m6A methylation of IFNB. M6A also regulates cortical neurogenesis: m6A methylation of transcripts related to transcription factors, neural stem cells, the cell cycle and neuronal differentiation during brain development promotes their destabilization and decay, promoting differentiation of radial glial cells. M6A also takes place in other RNA molecules, such as primary miRNA (pri-miRNAs). Mediates m6A methylation of Xist RNA, thereby participating in random X inactivation: m6A methylation of Xist leads to target YTHDC1 reader on Xist and promote transcription repression activity of Xist. METTL3 mediates methylation of pri-miRNAs, marking them for recognition and processing by DGCR8. Acts as a positive regulator of mRNA translation independently of the methyltransferase activity: promotes translation by interacting with the translation initiation machinery in the cytoplasm. This chain is N(6)-adenosine-methyltransferase catalytic subunit METTL3, found in Mus musculus (Mouse).